The chain runs to 162 residues: Phosphopantetheine adenylyltransferase (162 aa).

Ser-9 is a substrate binding site. ATP contacts are provided by residues 9–10 and His-17; that span reads SF. Lys-41, Leu-73, and Lys-87 together coordinate substrate. ATP is bound by residues 88–90, Glu-98, and 123–129; these read GLR and YAHLSSS.

Belongs to the bacterial CoaD family. Homohexamer. It depends on Mg(2+) as a cofactor.

The protein resides in the cytoplasm. The catalysed reaction is (R)-4'-phosphopantetheine + ATP + H(+) = 3'-dephospho-CoA + diphosphate. It functions in the pathway cofactor biosynthesis; coenzyme A biosynthesis; CoA from (R)-pantothenate: step 4/5. Functionally, reversibly transfers an adenylyl group from ATP to 4'-phosphopantetheine, yielding dephospho-CoA (dPCoA) and pyrophosphate. The protein is Phosphopantetheine adenylyltransferase of Symbiobacterium thermophilum (strain DSM 24528 / JCM 14929 / IAM 14863 / T).